Consider the following 804-residue polypeptide: Endoplasmin (804 aa).

The signal sequence occupies residues 1 to 21 (MRALWVLGLCCVLLTFGSVRA). Positions 42 to 44 (SRT) match the SRT pseudosubstrate motif motif. The N-linked (GlcNAc...) asparagine glycan is linked to N62. S64 carries the phosphoserine modification. N107 carries an N-linked (GlcNAc...) asparagine glycan. ATP is bound by residues N107, D149, and N162. K168 carries the N6-(2-hydroxyisobutyryl)lysine modification. S172 is modified (phosphoserine). F199 provides a ligand contact to ATP. Residue N217 is glycosylated (N-linked (GlcNAc...) asparagine). The segment at 288–323 (TVEEPAEEEEAAKEDKEESDDEAAVEEEEDEKKPKT) is disordered. The segment covering 289-317 (VEEPAEEEEAAKEDKEESDDEAAVEEEED) has biased composition (acidic residues). A phosphoserine mark is found at S306 and S403. K404 carries the N6-succinyllysine modification. N445 carries N-linked (GlcNAc...) asparagine glycosylation. The residue at position 447 (S447) is a Phosphoserine. N6-acetyllysine is present on K479. N-linked (GlcNAc...) asparagine glycosylation is found at N481 and N502. An N6-succinyllysine modification is found at K633. A disordered region spans residues 750–804 (DPDAKVEEEPEEEPEETTEDTAEDTEQDEEEEMDAGTDEEEQETAEKSTAEKDEL). A compositionally biased stretch (acidic residues) spans 757–792 (EEPEEEPEETTEDTAEDTEQDEEEEMDAGTDEEEQE). T786 is subject to Phosphothreonine. Residues 793–804 (TAEKSTAEKDEL) are compositionally biased toward basic and acidic residues. The Prevents secretion from ER signature appears at 801–804 (KDEL).

This sequence belongs to the heat shock protein 90 family. Homodimer; disulfide-linked. Component of an EIF2 complex at least composed of CELF1/CUGBP1, CALR, CALR3, EIF2S1, EIF2S2, HSP90B1 and HSPA5. Part of a large chaperone multiprotein complex comprising DNAJB11, HSP90B1, HSPA5, HYOU, PDIA2, PDIA4, PDIA6, PPIB, SDF2L1, UGGT1 and very small amounts of ERP29, but not, or at very low levels, CALR nor CANX. Interacts with AIMP1; regulates its retention in the endoplasmic reticulum. Hyperglycosylated form interacts with OS9; promoting its degradation by the endoplasmic reticulum associated degradation (ERAD). Interacts with CNPY3. This interaction is disrupted in the presence of ATP. Interacts with TLR4 and TLR9, but not with TLR3. Interacts with MZB1 in a calcium-dependent manner. Interacts with METTL23. Interacts with IL1B; the interaction facilitates cargo translocation into the ERGIC. Interacts with EIF2AK3. Phosphorylated by CK2. Post-translationally, N-glycosylated cotranslationally at Asn-217 by STT3A-containing OST-A complex: this glycosylation is constitutive. In response to various stress, 5 additional facultative sites (Asn-62, Asn-107, Asn-445, Asn-481 and Asn-502) can be glycosylated post-translationally by STT3B-containing OST-B complex, leading to a hyperglycosylated form that is degraded by the ER-associated degradation (ERAD) pathway. In normal conditions, the OST-A complex together with CCDC134 prevent glycosylation at facultative sites during protein folding, thereby preventing hyperglycosylation. Mechanistically, nascent HSP90B1 is tethered during translation to a specialized CCDC134-containing translocon that forms a microenvironment for its folding, in which STT3A associates with the SRT pseudosubstrate motif, and prevents access to facultative glycosylation sites until folding is completed, rendering its facultative sites inaccessible to the OST-B complex.

It is found in the endoplasmic reticulum lumen. The protein localises to the sarcoplasmic reticulum lumen. It localises to the melanosome. It catalyses the reaction ATP + H2O = ADP + phosphate + H(+). ATP-dependent chaperone involved in the processing of proteins in the endoplasmic reticulum, regulating their transport. Together with MESD, acts as a modulator of the Wnt pathway by promoting the folding of LRP6, a coreceptor of the canonical Wnt pathway. When associated with CNPY3, required for proper folding of Toll-like receptors. Promotes folding and trafficking of TLR4 to the cell surface. May participate in the unfolding of cytosolic leaderless cargos (lacking the secretion signal sequence) such as the interleukin 1/IL-1 to facilitate their translocation into the ERGIC (endoplasmic reticulum-Golgi intermediate compartment) and secretion; the translocation process is mediated by the cargo receptor TMED10. This chain is Endoplasmin (HSP90B1), found in Bos taurus (Bovine).